Here is a 59-residue protein sequence, read N- to C-terminus: uncharacterized protein (59 aa).

This is an uncharacterized protein from Chenopodium amaranticolor (Quinoa).